The chain runs to 159 residues: Probable inactive acireductone dioxygenase 1 (159 aa).

It belongs to the acireductone dioxygenase (ARD) family.

The protein localises to the cytoplasm. It is found in the nucleus. Probable inactive acireductone dioxygenase. The polypeptide is Probable inactive acireductone dioxygenase 1 (Caenorhabditis elegans).